The primary structure comprises 387 residues: Dual specificity mitogen-activated protein kinase kinase mek-2 (387 aa).

Positions 1 to 37 are disordered; sequence MSSGKRRNPLGLSLPPTVNEQSESGEATAEEATATVP. Positions 16-25 are enriched in polar residues; it reads PTVNEQSESG. Over residues 26-35 the composition is skewed to low complexity; that stretch reads EATAEEATAT. Residues 73–360 form the Protein kinase domain; it reads LQTEGELGHG…LKSLTADVFF (288 aa). Residues 79-87 and lysine 102 contribute to the ATP site; that span reads LGHGNGGVV. The active-site Proton acceptor is aspartate 195. Phosphoserine is present on residues serine 223 and serine 227.

This sequence belongs to the protein kinase superfamily. STE Ser/Thr protein kinase family. MAP kinase kinase subfamily. In terms of assembly, interacts with ksr-1.

It catalyses the reaction L-seryl-[protein] + ATP = O-phospho-L-seryl-[protein] + ADP + H(+). The catalysed reaction is L-threonyl-[protein] + ATP = O-phospho-L-threonyl-[protein] + ADP + H(+). It carries out the reaction L-tyrosyl-[protein] + ATP = O-phospho-L-tyrosyl-[protein] + ADP + H(+). Activated by tyrosine and threonine phosphorylation catalyzed by MAP kinase kinase kinases. Functionally, functions in the let-60 Ras signaling pathway; acts downstream of lin-45 raf kinase, but before the sur-1/mpk-1 gene product in controlling vulval cell differentiation. Required for progression of developing oocytes through the pachytene stage. Plays a role in responses to M.nematophilum-mediated bacterial infection by promoting tail swelling and preventing constipation. Involved in fluid homeostasis. Positively regulates lifespan upstream of mpk-1. This Caenorhabditis elegans protein is Dual specificity mitogen-activated protein kinase kinase mek-2 (mek-2).